A 728-amino-acid polypeptide reads, in one-letter code: Procollagen-lysine,2-oxoglutarate 5-dioxygenase 1 (728 aa).

Positions 1–18 are cleaved as a signal peptide; sequence MRSLLLLAPLAWLLLVQA. 2 N-linked (GlcNAc...) asparagine glycosylation sites follow: Asn198 and Asn539. In terms of domain architecture, Fe2OG dioxygenase spans 637 to 728; the sequence is QFDLAFVVRY…RYIAVSFVDP (92 aa). Residues His657 and Asp659 each contribute to the Fe cation site. An N-linked (GlcNAc...) asparagine glycan is attached at Asn687. His709 is a Fe cation binding site. The active site involves Arg719.

As to quaternary structure, homodimer. Identified in a complex with P3H3 and P3H4. The cofactor is Fe(2+). It depends on L-ascorbate as a cofactor. As to expression, highly expressed in the liver, heart, lung, skeletal muscle and kidney.

The protein localises to the rough endoplasmic reticulum membrane. The enzyme catalyses L-lysyl-[collagen] + 2-oxoglutarate + O2 = (5R)-5-hydroxy-L-lysyl-[collagen] + succinate + CO2. In terms of biological role, part of a complex composed of PLOD1, P3H3 and P3H4 that catalyzes hydroxylation of lysine residues in collagen alpha chains and is required for normal assembly and cross-linkling of collagen fibrils. Forms hydroxylysine residues in -Xaa-Lys-Gly- sequences in collagens. These hydroxylysines serve as sites of attachment for carbohydrate units and are essential for the stability of the intermolecular collagen cross-links. This is Procollagen-lysine,2-oxoglutarate 5-dioxygenase 1 (Plod1) from Mus musculus (Mouse).